The following is a 419-amino-acid chain: MGMSATMGDSASIPGVFFADFGPAPPEITPEGYHEVELNKTKWVLPQWYNSLKPLGEGAYGVVCTAEYEPTGDRVAIKKFFRPFQSTIHAKRTYRELKLLRTLQHDNVLEMIDVFTPDPDASSLNNVYFVSVLMGSDLQNIMKIQRLTDEQIQLLIYQVLRGLKYIHSAGIIHRDLKPSNIAVNERCEVKVFLSFSQLSFLILSFFKILDFGLARAQDAEMTGYVATRWYRAPEIMLNWMHYTQTVDVWSVGCILAELVSGRPLFPGDDHIDQLTKIMSVVGTPKEEFWSKIQSEEARNYIKNRSPIIRQDFVTLFPMASPYALELLEMMLILDPDRRISVSSALRHDYLREYSVPNDEPVAMDTVINSIVTIDPAEERATTLSDWRELIWNEIRLFQNSARRLSFVSCTDTEEEPMKI.

The 302-residue stretch at 49-350 folds into the Protein kinase domain; sequence YNSLKPLGEG…VSSALRHDYL (302 aa). ATP is bound by residues 55–63 and lysine 78; that span reads LGEGAYGVV. The Proton acceptor role is filled by aspartate 210. Threonine 222 is subject to Phosphothreonine. The TXY signature appears at 222-224; sequence TGY. Tyrosine 224 carries the post-translational modification Phosphotyrosine.

It belongs to the protein kinase superfamily. CMGC Ser/Thr protein kinase family. MAP kinase subfamily. Requires Mg(2+) as cofactor. Post-translationally, dually phosphorylated on Thr-222 and Tyr-224, which activates the enzyme.

The protein resides in the cytoplasm. It carries out the reaction L-seryl-[protein] + ATP = O-phospho-L-seryl-[protein] + ADP + H(+). The enzyme catalyses L-threonyl-[protein] + ATP = O-phospho-L-threonyl-[protein] + ADP + H(+). Activated by phosphorylation on threonine and tyrosine. Inhibited by pyridinyl-imidazole related compounds. Functionally, responds to activation by environmental stress and pro-inflammatory cytokines by phosphorylating downstream targets. The sequence is that of Mitogen-activated protein kinase pmk-2 (pmk-2) from Caenorhabditis elegans.